Here is a 252-residue protein sequence, read N- to C-terminus: Probable transcriptional regulatory protein RF_0799 (252 aa).

Residues 1-21 form a disordered region; the sequence is MAGHSKFKNIQHRKGAQDKKR.

The protein belongs to the TACO1 family.

It is found in the cytoplasm. The chain is Probable transcriptional regulatory protein RF_0799 from Rickettsia felis (strain ATCC VR-1525 / URRWXCal2) (Rickettsia azadi).